Here is a 96-residue protein sequence, read N- to C-terminus: Aspartyl/glutamyl-tRNA(Asn/Gln) amidotransferase subunit C (96 aa).

It belongs to the GatC family. In terms of assembly, heterotrimer of A, B and C subunits.

It catalyses the reaction L-glutamyl-tRNA(Gln) + L-glutamine + ATP + H2O = L-glutaminyl-tRNA(Gln) + L-glutamate + ADP + phosphate + H(+). The enzyme catalyses L-aspartyl-tRNA(Asn) + L-glutamine + ATP + H2O = L-asparaginyl-tRNA(Asn) + L-glutamate + ADP + phosphate + 2 H(+). Allows the formation of correctly charged Asn-tRNA(Asn) or Gln-tRNA(Gln) through the transamidation of misacylated Asp-tRNA(Asn) or Glu-tRNA(Gln) in organisms which lack either or both of asparaginyl-tRNA or glutaminyl-tRNA synthetases. The reaction takes place in the presence of glutamine and ATP through an activated phospho-Asp-tRNA(Asn) or phospho-Glu-tRNA(Gln). The chain is Aspartyl/glutamyl-tRNA(Asn/Gln) amidotransferase subunit C from Aliarcobacter butzleri (strain RM4018) (Arcobacter butzleri).